The primary structure comprises 311 residues: N-acetylmuramic acid 6-phosphate etherase (311 aa).

An SIS domain is found at 66–229; sequence VAVRMARGGR…STITMIRLGK (164 aa). Glutamate 94 acts as the Proton donor in catalysis. The active site involves glutamate 125.

The protein belongs to the GCKR-like family. MurNAc-6-P etherase subfamily. As to quaternary structure, homodimer.

The catalysed reaction is N-acetyl-D-muramate 6-phosphate + H2O = N-acetyl-D-glucosamine 6-phosphate + (R)-lactate. Its pathway is amino-sugar metabolism; N-acetylmuramate degradation. Specifically catalyzes the cleavage of the D-lactyl ether substituent of MurNAc 6-phosphate, producing GlcNAc 6-phosphate and D-lactate. The sequence is that of N-acetylmuramic acid 6-phosphate etherase from Streptomyces coelicolor (strain ATCC BAA-471 / A3(2) / M145).